A 107-amino-acid polypeptide reads, in one-letter code: Large ribosomal subunit protein uL24 (107 aa).

Belongs to the universal ribosomal protein uL24 family. Part of the 50S ribosomal subunit.

In terms of biological role, one of two assembly initiator proteins, it binds directly to the 5'-end of the 23S rRNA, where it nucleates assembly of the 50S subunit. Functionally, one of the proteins that surrounds the polypeptide exit tunnel on the outside of the subunit. The protein is Large ribosomal subunit protein uL24 of Fervidobacterium nodosum (strain ATCC 35602 / DSM 5306 / Rt17-B1).